We begin with the raw amino-acid sequence, 350 residues long: Arginine N-succinyltransferase (350 aa).

Leu-125 is a succinyl-CoA binding site. Catalysis depends on His-229, which acts as the Proton donor.

This sequence belongs to the arginine N-succinyltransferase family.

The enzyme catalyses succinyl-CoA + L-arginine = N(2)-succinyl-L-arginine + CoA + H(+). It functions in the pathway amino-acid degradation; L-arginine degradation via AST pathway; L-glutamate and succinate from L-arginine: step 1/5. Its function is as follows. Catalyzes the transfer of succinyl-CoA to arginine to produce N(2)-succinylarginine. This chain is Arginine N-succinyltransferase, found in Yersinia pseudotuberculosis serotype O:3 (strain YPIII).